We begin with the raw amino-acid sequence, 333 residues long: tRNA(Ile)-lysidine synthase (333 aa).

Serine 25 to serine 30 lines the ATP pocket.

The protein belongs to the tRNA(Ile)-lysidine synthase family.

It is found in the cytoplasm. It catalyses the reaction cytidine(34) in tRNA(Ile2) + L-lysine + ATP = lysidine(34) in tRNA(Ile2) + AMP + diphosphate + H(+). In terms of biological role, ligates lysine onto the cytidine present at position 34 of the AUA codon-specific tRNA(Ile) that contains the anticodon CAU, in an ATP-dependent manner. Cytidine is converted to lysidine, thus changing the amino acid specificity of the tRNA from methionine to isoleucine. This is tRNA(Ile)-lysidine synthase from Ureaplasma parvum serovar 3 (strain ATCC 700970).